A 393-amino-acid polypeptide reads, in one-letter code: STE20-related kinase adapter protein alpha (393 aa).

Residues Ser-2 and Ser-9 each carry the phosphoserine modification. A Protein kinase domain is found at 32–341 (YELLSVIGKG…ASTLLNHSFF (310 aa)). Residue Thr-381 is modified to Phosphothreonine; by LKB1.

The protein belongs to the protein kinase superfamily. STE Ser/Thr protein kinase family. STE20 subfamily. As to quaternary structure, component of a trimeric complex composed of STK11/LKB1, STRAD (STRADA or STRADB) and CAB39/MO25 (CAB39/MO25alpha or CAB39L/MO25beta): the complex tethers STK11/LKB1 in the cytoplasm and stimulates its catalytic activity. In terms of tissue distribution, expressed in liver.

The protein resides in the nucleus. The protein localises to the cytoplasm. Its function is as follows. Pseudokinase which, in complex with CAB39/MO25 (CAB39/MO25alpha or CAB39L/MO25beta), binds to and activates STK11/LKB1. Adopts a closed conformation typical of active protein kinases and binds STK11/LKB1 as a pseudosubstrate, promoting conformational change of STK11/LKB1 in an active conformation. The protein is STE20-related kinase adapter protein alpha (Strada) of Rattus norvegicus (Rat).